The sequence spans 385 residues: Glucans biosynthesis protein C (385 aa).

The next 10 membrane-spanning stretches (helical) occupy residues 17–37 (AWLM…SHTW), 60–80 (MQVF…RYPL), 91–111 (VGIP…IMLQ), 137–157 (ISHL…VWIF), 173–193 (KFSM…YAVI), 212–232 (FIVM…LAFI), 239–259 (LFTT…VAYL), 274–294 (TESV…FSFG), 311–331 (ASLF…AYIT), and 338–358 (WLGF…LYEI).

It belongs to the acyltransferase 3 family. OpgC subfamily.

It is found in the cell membrane. It functions in the pathway glycan metabolism; osmoregulated periplasmic glucan (OPG) biosynthesis. Functionally, necessary for the succinyl substitution of periplasmic glucans. Could catalyze the transfer of succinyl residues from the cytoplasmic side of the membrane to the nascent glucan backbones on the periplasmic side of the membrane. The polypeptide is Glucans biosynthesis protein C (Escherichia coli O17:K52:H18 (strain UMN026 / ExPEC)).